A 395-amino-acid chain; its full sequence is Ribosomal RNA small subunit methyltransferase H (395 aa).

S-adenosyl-L-methionine contacts are provided by residues 101–103, Asp-120, Tyr-147, Asp-171, and Gln-178; that span reads GGH.

It belongs to the methyltransferase superfamily. RsmH family.

Its subcellular location is the cytoplasm. The catalysed reaction is cytidine(1402) in 16S rRNA + S-adenosyl-L-methionine = N(4)-methylcytidine(1402) in 16S rRNA + S-adenosyl-L-homocysteine + H(+). Its function is as follows. Specifically methylates the N4 position of cytidine in position 1402 (C1402) of 16S rRNA. This Mycobacterium ulcerans (strain Agy99) protein is Ribosomal RNA small subunit methyltransferase H.